We begin with the raw amino-acid sequence, 460 residues long: Argininosuccinate lyase (460 aa).

It belongs to the lyase 1 family. Argininosuccinate lyase subfamily.

The protein resides in the cytoplasm. The enzyme catalyses 2-(N(omega)-L-arginino)succinate = fumarate + L-arginine. Its pathway is amino-acid biosynthesis; L-arginine biosynthesis; L-arginine from L-ornithine and carbamoyl phosphate: step 3/3. This is Argininosuccinate lyase from Nitratidesulfovibrio vulgaris (strain ATCC 29579 / DSM 644 / CCUG 34227 / NCIMB 8303 / VKM B-1760 / Hildenborough) (Desulfovibrio vulgaris).